Here is a 126-residue protein sequence, read N- to C-terminus: Large ribosomal subunit protein bL17c (126 aa).

The N-terminal 10 residues, 1 to 10, are a transit peptide targeting the chloroplast; that stretch reads MIDNGGRFFA.

Component of the chloroplast large ribosomal subunit (LSU). Mature 70S chloroplast ribosomes of higher plants consist of a small (30S) and a large (50S) subunit. The 30S small subunit contains 1 molecule of ribosomal RNA (16S rRNA) and 24 different proteins. The 50S large subunit contains 3 rRNA molecules (23S, 5S and 4.5S rRNA) and 33 different proteins.

It localises to the plastid. The protein resides in the chloroplast. Component of the chloroplast ribosome (chloro-ribosome), a dedicated translation machinery responsible for the synthesis of chloroplast genome-encoded proteins, including proteins of the transcription and translation machinery and components of the photosynthetic apparatus. The polypeptide is Large ribosomal subunit protein bL17c (RPL17) (Spinacia oleracea (Spinach)).